Here is a 209-residue protein sequence, read N- to C-terminus: Transmembrane domain-containing protein TMIGD3 (209 aa).

The signal sequence occupies residues 1-15; the sequence is MEFLLLLSLALFSDA. A helical transmembrane segment spans residues 152-172; it reads SILIICILITSLGIIFIISHL. Positions 179–201 are disordered; it reads QRNREVTGKSISRNPQASQGPSM. The span at 187 to 201 shows a compositional bias: polar residues; sequence KSISRNPQASQGPSM.

The protein resides in the membrane. The protein is Transmembrane domain-containing protein TMIGD3 (Tmigd3) of Mus musculus (Mouse).